We begin with the raw amino-acid sequence, 558 residues long: Ribonuclease Y (558 aa).

A helical transmembrane segment spans residues 3 to 23 (VLSILLILVAVGVGIFVGRQF). Residues 248-311 (TTTTVELPSN…EIAKEALQRL (64 aa)) form the KH domain. In terms of domain architecture, HD spans 374-467 (VLLHSKEVAY…VCAADALSAA (94 aa)).

Belongs to the RNase Y family.

Its subcellular location is the cell membrane. Functionally, endoribonuclease that initiates mRNA decay. In Aquifex aeolicus (strain VF5), this protein is Ribonuclease Y.